A 384-amino-acid chain; its full sequence is Opsin-3 (384 aa).

Over 1–62 the chain is Extracellular; it reads MATNFTQELY…VSKYWHYVLA (62 aa). Asn-4 carries N-linked (GlcNAc...) asparagine glycosylation. A helical transmembrane segment spans residues 63-83; that stretch reads LIYTMLMVTSLTGNGIVIWIF. Over 84 to 94 the chain is Cytoplasmic; it reads STSKSLRSASN. The helical transmembrane segment at 95–115 threads the bilayer; it reads MFVINLAVFDLMMMLEMPLLI. The Extracellular portion of the chain corresponds to 116-132; that stretch reads MNSFYQRLVGYQLGCDV. An intrachain disulfide couples Cys-130 to Cys-207. A helical transmembrane segment spans residues 133-153; sequence YAVLGSLSGIGGAITNAVIAF. Topologically, residues 154 to 171 are cytoplasmic; the sequence is DRYKTISSPLDGRINTVQ. A helical membrane pass occupies residues 172-192; the sequence is AGLLIAFTWFWALPFTILPAF. The Extracellular segment spans residues 193–219; sequence RIWGRFVPEGFLTTCSFDYFTEDQDTE. The chain crosses the membrane as a helical span at residues 220–240; it reads VFVACIFVWSYCIPMALICYF. Residues 241–284 lie on the Cytoplasmic side of the membrane; it reads YSQLFGAVRLHERMLQEQAKKMNVKSLASNKEDNSRSVEIRIAK. A helical transmembrane segment spans residues 285 to 305; the sequence is VAFTIFFLFICAWTPYAFVTM. At 306–312 the chain is on the extracellular side; the sequence is TGAFGDR. Residues 313-333 traverse the membrane as a helical segment; sequence TLLTPIATMIPAVCCKVVSCI. Residues 334–384 are Cytoplasmic-facing; sequence DPWVYAINHPRYRAELQKRLPWMGVREQDPDAVSTTTSVATAGFQPPAAEA.

It belongs to the G-protein coupled receptor 1 family. Opsin subfamily. In terms of tissue distribution, in the retina, expression is essentially uniformly distributed but a higher level is seen in the ventral region where the B-cells are localized.

The protein resides in the membrane. Visual pigments are the light-absorbing molecules that mediate vision. They consist of an apoprotein, opsin, covalently linked to cis-retinal. May play a role in photoperiodic photoreception. The sequence is that of Opsin-3 (OP3) from Manduca sexta (Tobacco hawkmoth).